An 808-amino-acid polypeptide reads, in one-letter code: Sucrose synthase (808 aa).

Positions 271 to 753 (MLFRIALISP…GIERVYSTYT (483 aa)) are GT-B glycosyltransferase.

The protein belongs to the glycosyltransferase 1 family. Probably a homotetramer.

It catalyses the reaction an NDP-alpha-D-glucose + D-fructose = a ribonucleoside 5'-diphosphate + sucrose + H(+). The catalysed reaction is ADP-alpha-D-glucose + D-fructose = sucrose + ADP + H(+). Catalyzes the reversible conversion of sucrose and a nucleotide disphosphate (NDP) into fructose and NDP-glucose; although the reaction is freely reversible in vitro, the physiological reaction seems to be sucrose cleavage. Unlike characterized plant enzymes prefers ADP as a cosubstrate, whereas plants prefer UDP. Its preference for ADP over UDP suggests it may directly link sucrose and glycogen metabolism. The chain is Sucrose synthase from Thermosynechococcus vestitus (strain NIES-2133 / IAM M-273 / BP-1).